Reading from the N-terminus, the 455-residue chain is O-acyltransferase pigD (455 aa).

The protein belongs to the trichothecene 3-O-acetyltransferase family.

The protein operates within secondary metabolite biosynthesis. Functionally, O-acetyltransferase; part of the gene cluster that mediates the biosynthesis of azaphilone pigments (MonAzPs), a complex mixture of compounds with a common azaphilone skeleton very widely used as food colorants. Within the pathway, pigD directly transfers the fatty acyl chain from the beta-ketoacyl-ACP produced by the pigJ-pigK fatty acid synthase (FAS) to the C-4 alcohol. The first step of the pathway is performed by the nrPKS pigA that forms the hexaketide precursor from successive condensations of five malonyl-CoA units, with a simple acetyl-CoA starter unit. The role of esterase pigG is not clear, but it may play at most a supplementary role in the formation of the benzaldehyde produced by the pigA nrPKS. This very reactive benzaldehyde is intercepted by the pigC ketoreductase that to provide the first stable enzyme-free MonAzPs intermediate, 6-(4-hydroxy-2-oxopentyl)-3-methyl-2,4-dioxocyclohexane carbaldehyde, also known as M7PKS-1. The FAD-dependent monooxygenase pigN hydroxylates M7PKS-1 at C-4, which triggers the formation of the pyran ring. PigJ, pigK and pigD are involved in the acetylation of the pyran ring. PigJ and pigK form the two subunits of a dedicated fungal FAS that produces the side chain fatty acyl moiety of MonAzPs and pigD transfers the fatty acyl chain to the C-4 alcohol. PigM and pigO are involved in the elimination of the omega-1 alcohol. PigM acts as an O-acetyltransferase that synthesizes the putative O-11 acetyl intermediate whereas pigO eliminates acetic acid to yield an intermediate with a C10(11) double bond. The dehydration of the C-11 alcohol followed by the reduction of the C6(7) double bond by the NAD(P)H-dependent oxidoreductase pigE increases the electrophilicity of the C-5 ketone of the resulting acyl benzopyran. This in turn sets up the C-5 ketone for an intramolecular Knoevenagel aldol condensation with the C-20 enol of the side chain. This condensation affords the characteristic linear tricyclic carbon skeletons of the yellow pigments that serve as the common precursors for the classical yellow pigments monascin and ankaflavin, orange pigments rubopunctatin and monascorubrin, and red pigments ribropunctamine and monascorubramine. The FAD-dependent oxidoreductase pigF is especially invoved in the biosynthesis of orange and red pigments via desaturation of C6(7). This Monascus ruber (Mold) protein is O-acyltransferase pigD.